We begin with the raw amino-acid sequence, 663 residues long: Zyxin (663 aa).

The interval 35–438 (PPKPKINPFK…QQDQTLGSQG (404 aa)) is disordered. 2 stretches are compositionally biased toward pro residues: residues 122–148 (FPPP…PPPL) and 160–211 (VPVP…PPSV). A compositionally biased stretch (polar residues) spans 298–314 (PQKTTEPPAEASQSSPK). Composition is skewed to basic and acidic residues over residues 342 to 353 (QRERPRVLEKPR) and 360 to 375 (EPEH…ERTR). Polar residues-rich tracts occupy residues 377–393 (LGPQ…QSTG) and 427–438 (TGQQDQTLGSQG). 3 LIM zinc-binding domains span residues 470–531 (ELCG…TLEC), 532–589 (CAVC…RRYA), and 590–660 (PRCC…RARA).

Belongs to the zyxin/ajuba family. As to quaternary structure, interacts (via LIM2 domain) with hesx1/anf1. As to expression, at the early gastrula stage, expressed at a low level in the animal hemisphere. Expression rises by the end of gastrulation in the anterior part of the embryo, where it gradually increases by the midneurula stage. During neurulation, expression continues most intensively in the anterior part of the neural plate and around it. At later stages, intensely expressed in the brain and at lower levels in the spinal cord, eyes, nasal placodes, within somites, and around the cement gland.

The protein resides in the cytoplasm. Its subcellular location is the cytoskeleton. It is found in the cell junction. It localises to the focal adhesion. In terms of biological role, adhesion plaque protein. May be a component of a signal transduction pathway that mediates adhesion-stimulated changes in gene expression. Suppresses the transcription-repressing activity of hesx1/anf1. The protein is Zyxin of Xenopus laevis (African clawed frog).